The chain runs to 126 residues: Putative lipoprotein LprD (126 aa).

The first 19 residues, 1-19 (MSTTRRRRPALVALVTIAA), serve as a signal peptide directing secretion. Cys-20 carries N-palmitoyl cysteine lipidation. The S-diacylglycerol cysteine moiety is linked to residue Cys-20. The helical transmembrane segment at 44-64 (GYALQWPLFAGFCLYTYHNFV) threads the bilayer.

This sequence to M.tuberculosis Rv1343c.

Its subcellular location is the cell membrane. The polypeptide is Putative lipoprotein LprD (lprD) (Mycobacterium leprae (strain TN)).